The following is a 274-amino-acid chain: Thiamine kinase (274 aa).

The protein belongs to the thiamine kinase family.

The catalysed reaction is thiamine + ATP = thiamine phosphate + ADP + H(+). It participates in cofactor biosynthesis; thiamine diphosphate biosynthesis; thiamine phosphate from thiamine: step 1/1. In terms of biological role, catalyzes the ATP-dependent phosphorylation of thiamine to thiamine phosphate. Is involved in thiamine salvage. This is Thiamine kinase from Escherichia coli O9:H4 (strain HS).